Consider the following 94-residue polypeptide: Beta-defensin 132 (94 aa).

The signal sequence occupies residues Met-1 to Ala-22. 2 disulfide bridges follow: Cys-27/Cys-55 and Cys-39/Cys-56. The disordered stretch occupies residues Gly-72–Ser-94. Positions Gln-76–Lys-86 are enriched in basic residues.

Belongs to the beta-defensin family.

It localises to the secreted. Functionally, has antibacterial activity. This chain is Beta-defensin 132 (DEFB132), found in Gorilla gorilla gorilla (Western lowland gorilla).